A 446-amino-acid chain; its full sequence is Iron-sulfur cluster assembly SufBD family protein PH1385 (446 aa).

It belongs to the iron-sulfur cluster assembly SufBD family.

This Pyrococcus horikoshii (strain ATCC 700860 / DSM 12428 / JCM 9974 / NBRC 100139 / OT-3) protein is Iron-sulfur cluster assembly SufBD family protein PH1385.